The primary structure comprises 312 residues: Malate dehydrogenase (312 aa).

NAD(+) contacts are provided by residues 7-13 and D34; that span reads GAAGGIG. Residues R81 and R87 each contribute to the substrate site. Residues N94 and 117 to 119 each bind NAD(+); that span reads ITN. Residues N119 and R153 each coordinate substrate. H177 acts as the Proton acceptor in catalysis. Position 227 (M227) interacts with NAD(+).

The protein belongs to the LDH/MDH superfamily. MDH type 1 family. As to quaternary structure, homodimer.

It carries out the reaction (S)-malate + NAD(+) = oxaloacetate + NADH + H(+). Its function is as follows. Catalyzes the reversible oxidation of malate to oxaloacetate. The protein is Malate dehydrogenase of Moritella marina (Vibrio marinus).